The following is a 64-amino-acid chain: Beta-defensin 2 (64 aa).

An N-terminal signal peptide occupies residues M1–T22. 3 disulfides stabilise this stretch: C31/C60, C38/C53, and C43/C61.

It belongs to the beta-defensin family.

The protein localises to the secreted. Has bactericidal activity. In Ovis aries (Sheep), this protein is Beta-defensin 2 (DEFB2).